The following is a 572-amino-acid chain: Delta-1-pyrroline-5-carboxylate dehydrogenase, mitochondrial (572 aa).

300 to 305 (GQISTR) is a binding site for NAD(+). E320 acts as the Proton acceptor in catalysis. C354 serves as the catalytic Nucleophile.

The protein belongs to the aldehyde dehydrogenase family.

Its subcellular location is the mitochondrion matrix. It catalyses the reaction L-glutamate 5-semialdehyde + NAD(+) + H2O = L-glutamate + NADH + 2 H(+). It participates in amino-acid degradation; L-proline degradation into L-glutamate; L-glutamate from L-proline: step 2/2. The polypeptide is Delta-1-pyrroline-5-carboxylate dehydrogenase, mitochondrial (prnC) (Emericella nidulans (strain FGSC A4 / ATCC 38163 / CBS 112.46 / NRRL 194 / M139) (Aspergillus nidulans)).